The following is an 848-amino-acid chain: Protein translocase subunit SecA (848 aa).

Residues Gln-86, Gly-104 to Thr-108, and Asp-508 contribute to the ATP site. The Zn(2+) site is built by Cys-833, Cys-835, Cys-844, and Cys-845.

Belongs to the SecA family. In terms of assembly, monomer and homodimer. Part of the essential Sec protein translocation apparatus which comprises SecA, SecYEG and auxiliary proteins SecDF. Other proteins may also be involved. The cofactor is Zn(2+).

The protein localises to the cell membrane. Its subcellular location is the cytoplasm. The enzyme catalyses ATP + H2O + cellular proteinSide 1 = ADP + phosphate + cellular proteinSide 2.. In terms of biological role, part of the Sec protein translocase complex. Interacts with the SecYEG preprotein conducting channel. Has a central role in coupling the hydrolysis of ATP to the transfer of proteins into and across the cell membrane, serving as an ATP-driven molecular motor driving the stepwise translocation of polypeptide chains across the membrane. This is Protein translocase subunit SecA from Caldicellulosiruptor saccharolyticus (strain ATCC 43494 / DSM 8903 / Tp8T 6331).